A 256-amino-acid polypeptide reads, in one-letter code: Tryptophan synthase alpha chain (256 aa).

Active-site proton acceptor residues include glutamate 45 and aspartate 56.

This sequence belongs to the TrpA family. In terms of assembly, tetramer of two alpha and two beta chains.

It carries out the reaction (1S,2R)-1-C-(indol-3-yl)glycerol 3-phosphate + L-serine = D-glyceraldehyde 3-phosphate + L-tryptophan + H2O. It participates in amino-acid biosynthesis; L-tryptophan biosynthesis; L-tryptophan from chorismate: step 5/5. The alpha subunit is responsible for the aldol cleavage of indoleglycerol phosphate to indole and glyceraldehyde 3-phosphate. The sequence is that of Tryptophan synthase alpha chain from Christiangramia forsetii (strain DSM 17595 / CGMCC 1.15422 / KT0803) (Gramella forsetii).